The following is a 250-amino-acid chain: Endonuclease NucS 2 (250 aa).

The protein belongs to the NucS endonuclease family.

It localises to the cytoplasm. Functionally, cleaves both 3' and 5' ssDNA extremities of branched DNA structures. This chain is Endonuclease NucS 2, found in Halobacterium salinarum (strain ATCC 700922 / JCM 11081 / NRC-1) (Halobacterium halobium).